The sequence spans 91 residues: Sec-independent protein translocase protein TatA (91 aa).

Residues 1–21 (MGAMSPWHWAIVALVVIILFG) form a helical membrane-spanning segment. Positions 44–91 (KEMQNDNSTPAPTAQQSAPAELPVADTTTAPVTPPAPVQPQHTEPKSA) are disordered. Positions 51–74 (STPAPTAQQSAPAELPVADTTTAP) are enriched in low complexity.

This sequence belongs to the TatA/E family. In terms of assembly, the Tat system comprises two distinct complexes: a TatABC complex, containing multiple copies of TatA, TatB and TatC subunits, and a separate TatA complex, containing only TatA subunits. Substrates initially bind to the TatABC complex, which probably triggers association of the separate TatA complex to form the active translocon.

The protein resides in the cell membrane. Functionally, part of the twin-arginine translocation (Tat) system that transports large folded proteins containing a characteristic twin-arginine motif in their signal peptide across membranes. TatA could form the protein-conducting channel of the Tat system. The protein is Sec-independent protein translocase protein TatA of Rhodococcus jostii (strain RHA1).